A 356-amino-acid polypeptide reads, in one-letter code: Arginine kinase (356 aa).

The Phosphagen kinase N-terminal domain maps to 9 to 91; that stretch reads KLEAGFQKLQ…FDPIIEDYHI (83 aa). 64–68 provides a ligand contact to L-arginine; the sequence is GVGIY. The Phosphagen kinase C-terminal domain maps to 119 to 356; it reads FVISTRVRCG…AELIKLEQSA (238 aa). ATP contacts are provided by residues 122–126 and histidine 185; that span reads STRVR. Residue glutamate 225 coordinates L-arginine. Arginine 229 contacts ATP. L-arginine is bound at residue cysteine 271. ATP is bound by residues 280–284 and 309–314; these read RASVH and RGTRGE. Glutamate 314 contributes to the L-arginine binding site.

It belongs to the ATP:guanido phosphotransferase family.

The catalysed reaction is L-arginine + ATP = N(omega)-phospho-L-arginine + ADP + H(+). The protein is Arginine kinase (ARGK) of Artemia franciscana (Brine shrimp).